Consider the following 1183-residue polypeptide: Translation initiation factor IF-2 (1183 aa).

Disordered stretches follow at residues 65 to 512 and 540 to 579; these read SSKN…KVHI and LARP…AMEL. Residues 83 to 99 are compositionally biased toward basic and acidic residues; it reads TQKDQKTEPKKKNHDQT. Residues 100–130 show a composition bias toward polar residues; that stretch reads ELSQAKLNTLLKPSQTLIKSQGSSQANNQKA. Residues 220 to 229 show a composition bias toward basic and acidic residues; the sequence is PKIDIQDKKP. A compositionally biased stretch (polar residues) spans 231-270; that stretch reads QPNNQKAKTRINQGEISPQKVGQGNIQKIKSQNKQNAPSR. Basic and acidic residues predominate over residues 288 to 304; that stretch reads IRKEKPVNKPHTNEVRN. Composition is skewed to polar residues over residues 321-336 and 357-367; these read ANRQ…NNRI and NRTTQGQNRPG. Basic and acidic residues predominate over residues 485–499; that stretch reads GRPDWDDSAKLDALR. Composition is skewed to basic residues over residues 544-553 and 560-574; these read SKPKVGKRNN and LKKR…RQRR. Positions 675–847 constitute a tr-type G domain; it reads RRPPVVTVMG…VLLVTEVEDL (173 aa). The tract at residues 684-691 is G1; it reads GHVDHGKT. Residue 684 to 691 participates in GTP binding; that stretch reads GHVDHGKT. A G2 region spans residues 709–713; the sequence is GITQH. The tract at residues 734–737 is G3; sequence DTPG. GTP is bound by residues 734–738 and 788–791; these read DTPGH and NKID. The segment at 788–791 is G4; that stretch reads NKID. The tract at residues 824-826 is G5; the sequence is SAI.

Belongs to the TRAFAC class translation factor GTPase superfamily. Classic translation factor GTPase family. IF-2 subfamily.

It is found in the cytoplasm. Functionally, one of the essential components for the initiation of protein synthesis. Protects formylmethionyl-tRNA from spontaneous hydrolysis and promotes its binding to the 30S ribosomal subunits. Also involved in the hydrolysis of GTP during the formation of the 70S ribosomal complex. This is Translation initiation factor IF-2 from Prochlorococcus marinus (strain NATL2A).